We begin with the raw amino-acid sequence, 348 residues long: D-alanine--D-alanine ligase (348 aa).

An ATP-grasp domain is found at 136-344 (KSVFKSYNLP…LEKLVANLIE (209 aa)). Residue 171–226 (NKIISYPCFIKPANLGSSVGITKAYSKEEFIAGIEFAAKYDERIIVEKSIEGRELE) participates in ATP binding. Mg(2+) contacts are provided by Asp297, Glu311, and Asn313.

The protein belongs to the D-alanine--D-alanine ligase family. Requires Mg(2+) as cofactor. The cofactor is Mn(2+).

Its subcellular location is the cytoplasm. The enzyme catalyses 2 D-alanine + ATP = D-alanyl-D-alanine + ADP + phosphate + H(+). Its pathway is cell wall biogenesis; peptidoglycan biosynthesis. Its function is as follows. Cell wall formation. This chain is D-alanine--D-alanine ligase, found in Prochlorococcus marinus (strain NATL2A).